A 221-amino-acid polypeptide reads, in one-letter code: Small ribosomal subunit protein uS3 (221 aa).

Positions 39 to 108 constitute a KH type-2 domain; the sequence is IRKFVKKELF…NVLINIVEVK (70 aa).

The protein belongs to the universal ribosomal protein uS3 family. In terms of assembly, part of the 30S ribosomal subunit. Forms a tight complex with proteins S10 and S14.

In terms of biological role, binds the lower part of the 30S subunit head. Binds mRNA in the 70S ribosome, positioning it for translation. The sequence is that of Small ribosomal subunit protein uS3 from Clostridium beijerinckii (strain ATCC 51743 / NCIMB 8052) (Clostridium acetobutylicum).